Consider the following 71-residue polypeptide: Small ribosomal subunit protein bS18 (71 aa).

This sequence belongs to the bacterial ribosomal protein bS18 family. In terms of assembly, part of the 30S ribosomal subunit. Forms a tight heterodimer with protein bS6.

In terms of biological role, binds as a heterodimer with protein bS6 to the central domain of the 16S rRNA, where it helps stabilize the platform of the 30S subunit. The protein is Small ribosomal subunit protein bS18 of Acaryochloris marina (strain MBIC 11017).